A 1066-amino-acid chain; its full sequence is Pumilio homolog 2 (1066 aa).

Residues 1-260 (MNHDFQALAL…TVGLFDYNSQ (260 aa)) form an interaction with SNAPIN region. Phosphoserine is present on residues S67, S70, S82, and S102. Disordered stretches follow at residues 106–203 (KLDS…GPLP), 368–408 (TANQ…AESL), and 490–551 (TGST…SASL). The segment covering 119–133 (RDAETDGPEKGDQKG) has biased composition (basic and acidic residues). A phosphoserine mark is found at S136, S177, and S181. Phosphothreonine is present on T183. Residues 368-383 (TANQQAASQAQPGQQQ) are compositionally biased toward low complexity. Over residues 394 to 406 (ITPSQGQQGQQAE) the composition is skewed to polar residues. At T395 the chain carries Phosphothreonine. Residues 503–514 (QPPQQQQQQQQP) are compositionally biased toward low complexity. A compositionally biased stretch (polar residues) spans 515-525 (STNLQSNSFYG). A compositionally biased stretch (low complexity) spans 526–540 (SSSLTNSSQSSSLFS). Residues S587 and S592 each carry the phosphoserine modification. The disordered stretch occupies residues 620 to 650 (SPIGMPLPSQTPGHSLTPPPSLSSHGSSSSL). Residues 630-650 (TPGHSLTPPPSLSSHGSSSSL) show a composition bias toward low complexity. Omega-N-methylarginine is present on R674. Residues S684 and S700 each carry the phosphoserine modification. Residues 706–1048 (GRSRLLEDFR…HILAKLEKYY (343 aa)) enclose the PUM-HD domain. Pumilio repeat units lie at residues 726–761 (DLIGHIVEFSQDQHGSRFIQQKLERATPAERQIVFN), 762–797 (EILQAAYQLMTDVFGNYVIQKFFEFGSLDQKLALAT), 798–835 (RIRGHVLPLALQMYGCRVIQKALESISSDQQVISEMVK), 836–871 (ELDGHVLKCVKDQNGNHVVQKCIECVQPQSLQFIID), 872–907 (AFKGQVFVLSTHPYGCRVIQRILEHCTAEQTLPILE), 908–943 (ELHQHTEQLVQDQYGNYVIQHVLEHGRPEDKSKIVS), 944–979 (EIRGKVLALSQHKFASNVVEKCVTHASRAERALLID), and 980–1022 (EVCC…IIMH). The tract at residues 741 to 745 (SRFIQ) is adenine-nucleotide binding in RNA target. Residues 777–781 (NYVIQ) form a uracil-nucleotide binding in RNA target region. Positions 813–817 (CRVIQ) are adenine-nucleotide binding in RNA target. The tract at residues 851–855 (NHVVQ) is non-specific-nucleotide binding in RNA target. Residues 887–891 (CRVIQ) are adenine-nucleotide binding in RNA target. Positions 923–927 (NYVIQ) are uracil-nucleotide binding in RNA target. Residues 959–963 (SNVVE) form a guanine-nucleotide binding in RNA target region. The interval 1002 to 1006 (NYVVQ) is uracil-nucleotide binding in RNA target.

Homodimer; homodimerizes in vitro. Interacts with DAZ1, DAZL and NANOS1 via its pumilio repeats. Interacts with NANOS3. Interacts with SNAPIN. Recruits the CCR4-POP2-NOT deadenylase leading to translational inhibition and mRNA degradation. Interacts with DDX20. In case of viral infection, interacts with DHX58. As to expression, widely expressed. Expressed in embryonic stem cells, heart, kidney, lung, skin, intestine, spleen and thymus. Expressed at intermediate level in brain and liver. Weakly or not expressed in muscles and stomach. Expressed at various stages of myeloid and lymphoid cell development. In the testis expressed in the spermatogoni, spermatocytes, spermatids and Sertoli cells.

It is found in the cytoplasm. The protein localises to the cytoplasmic granule. Its subcellular location is the perinuclear region. Its function is as follows. Sequence-specific RNA-binding protein that acts as a post-transcriptional repressor by binding the 3'-UTR of mRNA targets. Binds to an RNA consensus sequence, the Pumilio Response Element (PRE), 5'-UGUANAUA-3', that is related to the Nanos Response Element (NRE). Mediates post-transcriptional repression of transcripts via different mechanisms: acts via direct recruitment of the CCR4-POP2-NOT deadenylase leading to translational inhibition and mRNA degradation. Also mediates deadenylation-independent repression by promoting accessibility of miRNAs. Acts as a post-transcriptional repressor of E2F3 mRNAs by binding to its 3'-UTR and facilitating miRNA regulation. Plays a role in cytoplasmic sensing of viral infection. Represses a program of genes necessary to maintain genomic stability such as key mitotic, DNA repair and DNA replication factors. Its ability to repress those target mRNAs is regulated by the lncRNA NORAD (non-coding RNA activated by DNA damage) which, due to its high abundance and multitude of PUMILIO binding sites, is able to sequester a significant fraction of PUM1 and PUM2 in the cytoplasm. May regulate DCUN1D3 mRNA levels. May support proliferation and self-renewal of stem cells. Binds specifically to miRNA MIR199A precursor, with PUM1, regulates miRNA MIR199A expression at a postranscriptional level. This Mus musculus (Mouse) protein is Pumilio homolog 2 (Pum2).